The primary structure comprises 554 residues: 2-succinyl-5-enolpyruvyl-6-hydroxy-3-cyclohexene-1-carboxylate synthase (554 aa).

It belongs to the TPP enzyme family. MenD subfamily. Homodimer. The cofactor is Mg(2+). Requires Mn(2+) as cofactor. It depends on thiamine diphosphate as a cofactor.

The catalysed reaction is isochorismate + 2-oxoglutarate + H(+) = 5-enolpyruvoyl-6-hydroxy-2-succinyl-cyclohex-3-ene-1-carboxylate + CO2. It participates in quinol/quinone metabolism; 1,4-dihydroxy-2-naphthoate biosynthesis; 1,4-dihydroxy-2-naphthoate from chorismate: step 2/7. The protein operates within quinol/quinone metabolism; menaquinone biosynthesis. Functionally, catalyzes the thiamine diphosphate-dependent decarboxylation of 2-oxoglutarate and the subsequent addition of the resulting succinic semialdehyde-thiamine pyrophosphate anion to isochorismate to yield 2-succinyl-5-enolpyruvyl-6-hydroxy-3-cyclohexene-1-carboxylate (SEPHCHC). This is 2-succinyl-5-enolpyruvyl-6-hydroxy-3-cyclohexene-1-carboxylate synthase from Mycobacterium tuberculosis (strain ATCC 25177 / H37Ra).